A 326-amino-acid polypeptide reads, in one-letter code: Eukaryotic translation initiation factor 3 subunit I (326 aa).

WD repeat units follow at residues 8-47 (GHER…RLGT), 50-89 (GHQG…VIAS), 145-184 (MTES…KVVD), 188-227 (DHSA…CLKT), and 285-326 (GHFG…NIFE).

Belongs to the eIF-3 subunit I family. In terms of assembly, component of the eukaryotic translation initiation factor 3 (eIF-3) complex. The eIF-3 complex interacts with pix.

It is found in the cytoplasm. Its function is as follows. Component of the eukaryotic translation initiation factor 3 (eIF-3) complex, which is involved in protein synthesis of a specialized repertoire of mRNAs and, together with other initiation factors, stimulates binding of mRNA and methionyl-tRNAi to the 40S ribosome. The eIF-3 complex specifically targets and initiates translation of a subset of mRNAs involved in cell proliferation. In Drosophila simulans (Fruit fly), this protein is Eukaryotic translation initiation factor 3 subunit I.